Consider the following 346-residue polypeptide: Uroporphyrinogen decarboxylase (346 aa).

Residues 23–27 (RQAGR), Asp72, Tyr149, Thr204, and His318 contribute to the substrate site.

It belongs to the uroporphyrinogen decarboxylase family. In terms of assembly, homodimer.

It localises to the cytoplasm. The enzyme catalyses uroporphyrinogen III + 4 H(+) = coproporphyrinogen III + 4 CO2. Its pathway is porphyrin-containing compound metabolism; protoporphyrin-IX biosynthesis; coproporphyrinogen-III from 5-aminolevulinate: step 4/4. Catalyzes the decarboxylation of four acetate groups of uroporphyrinogen-III to yield coproporphyrinogen-III. The protein is Uroporphyrinogen decarboxylase of Synechococcus sp. (strain JA-2-3B'a(2-13)) (Cyanobacteria bacterium Yellowstone B-Prime).